The chain runs to 218 residues: Capsid protein (218 aa).

N-acetylmethionine; by host is present on M1. A compositionally biased stretch (low complexity) spans 1–10 (MDKSESTSAG). Residues 1-30 (MDKSESTSAGRNRRRRLRRGSRSAPSSSDA) are disordered. The segment covering 11-21 (RNRRRRLRRGS) has biased composition (basic residues).

The protein belongs to the cucumovirus capsid protein family.

It localises to the virion. In terms of biological role, capsid protein. Probably binds RNA and plays a role in packaging. This Cucumber mosaic virus (strain Kor) (CMV) protein is Capsid protein.